The following is a 347-amino-acid chain: Gentisate 1,2 dioxygenase 1 (347 aa).

The Cupin type-2 domain maps to 96-163 (LQLILPGEVA…DSDKPMIWMD (68 aa)).

Belongs to the gentisate 1,2-dioxygenase family. As to quaternary structure, homotetramer. It depends on Fe(2+) as a cofactor.

The enzyme catalyses 2,5-dihydroxybenzoate + O2 = 3-maleylpyruvate + H(+). Completely inhibited by the presence of 5 mM Cu(2+). Partially inhibited with 5 mM Mn(2+), Zn(2+) or EDTA. Involved in the degradation of gentisate. Catalyzes the conversion of gentisate (2,5-dihydroxybenzoate) to maleylpyruvate. Exhibits broad substrate specificities towards alkyl and halogenated gentisates. The protein is Gentisate 1,2 dioxygenase 1 of Aquipseudomonas alcaligenes (Pseudomonas alcaligenes).